The chain runs to 326 residues: tRNA-dihydrouridine(16) synthase (326 aa).

FMN contacts are provided by residues 8-10 (PME) and Q69. The Proton donor role is filled by C99. Residues K140, 200–202 (NGE), and 224–225 (GR) each bind FMN.

It belongs to the Dus family. DusC subfamily. Requires FMN as cofactor.

It carries out the reaction 5,6-dihydrouridine(16) in tRNA + NADP(+) = uridine(16) in tRNA + NADPH + H(+). The catalysed reaction is 5,6-dihydrouridine(16) in tRNA + NAD(+) = uridine(16) in tRNA + NADH + H(+). Functionally, catalyzes the synthesis of 5,6-dihydrouridine (D), a modified base found in the D-loop of most tRNAs, via the reduction of the C5-C6 double bond in target uridines. Specifically modifies U16 in tRNAs. The protein is tRNA-dihydrouridine(16) synthase of Ralstonia nicotianae (strain ATCC BAA-1114 / GMI1000) (Ralstonia solanacearum).